Here is a 245-residue protein sequence, read N- to C-terminus: 1-(5-phosphoribosyl)-5-[(5-phosphoribosylamino)methylideneamino] imidazole-4-carboxamide isomerase (245 aa).

Aspartate 7 (proton acceptor) is an active-site residue. The Proton donor role is filled by aspartate 129.

It belongs to the HisA/HisF family.

Its subcellular location is the cytoplasm. The catalysed reaction is 1-(5-phospho-beta-D-ribosyl)-5-[(5-phospho-beta-D-ribosylamino)methylideneamino]imidazole-4-carboxamide = 5-[(5-phospho-1-deoxy-D-ribulos-1-ylimino)methylamino]-1-(5-phospho-beta-D-ribosyl)imidazole-4-carboxamide. It participates in amino-acid biosynthesis; L-histidine biosynthesis; L-histidine from 5-phospho-alpha-D-ribose 1-diphosphate: step 4/9. In Salmonella dublin (strain CT_02021853), this protein is 1-(5-phosphoribosyl)-5-[(5-phosphoribosylamino)methylideneamino] imidazole-4-carboxamide isomerase.